A 147-amino-acid chain; its full sequence is Small ribosomal subunit protein bS16m (147 aa).

The protein belongs to the bacterial ribosomal protein bS16 family. In terms of assembly, component of the mitochondrial ribosome small subunit (28S) which comprises a 12S rRNA and about 30 distinct proteins.

It is found in the mitochondrion. The sequence is that of Small ribosomal subunit protein bS16m (mrps-16) from Caenorhabditis elegans.